Consider the following 437-residue polypeptide: Xylose isomerase (437 aa).

Residues His-101 and Asp-104 contribute to the active site. Glu-232, Glu-268, His-271, Asp-296, Asp-307, Asp-309, and Asp-339 together coordinate Mg(2+).

This sequence belongs to the xylose isomerase family. In terms of assembly, homotetramer. It depends on Mg(2+) as a cofactor.

Its subcellular location is the cytoplasm. The catalysed reaction is alpha-D-xylose = alpha-D-xylulofuranose. This Mannheimia succiniciproducens (strain KCTC 0769BP / MBEL55E) protein is Xylose isomerase.